Here is a 295-residue protein sequence, read N- to C-terminus: Ethanolamine ammonia-lyase small subunit (295 aa).

3 residues coordinate adenosylcob(III)alamin: Val207, Glu228, and Cys258.

Belongs to the EutC family. As to quaternary structure, the basic unit is a heterodimer which dimerizes to form tetramers. The heterotetramers trimerize; 6 large subunits form a core ring with 6 small subunits projecting outwards. Adenosylcob(III)alamin is required as a cofactor.

It is found in the bacterial microcompartment. It carries out the reaction ethanolamine = acetaldehyde + NH4(+). It functions in the pathway amine and polyamine degradation; ethanolamine degradation. In terms of biological role, catalyzes the deamination of various vicinal amino-alcohols to oxo compounds. Allows this organism to utilize ethanolamine as the sole source of nitrogen and carbon in the presence of external vitamin B12. This Shigella sonnei (strain Ss046) protein is Ethanolamine ammonia-lyase small subunit.